Consider the following 704-residue polypeptide: MSRRTRCEDLDELHYQDVDSDLLEQRDNRCKVKWTHEEDEQLRALVRQFGQQDWKFLASHFPNRTDQQCQYRWLRVLNPDLVKGPWTKEEDQKVIELVKKYGTKQWTLIAKHLKGRLGKQCRERWHNHLNPEVKKSCWTEEEDRIICEAHKVLGNRWAEIAKMLPGRTDNAVKNHWNSTIKRKVDTGGFPAESRDCKPVYLLLELEDKEQHQGVQPVDGQGSLVSSWPLVPSIVKEESSEEEIAIAATSAKELGHEPVPADLGEVRTPEPPESLKREYQEFSSPETSLPYKWVVEAANLLIPAVGSSLSEALDLIESDPDAWCDLSKFDLPEEPSTEGSVVSSPVQPQTSQQQQEEALQSSQQAATPGPSVTEYRLDGHTISDLSRSSRGELIPISPSTEFGGSGIGTPPSVLKRQKKRRVALSPVTENSASLSFLDSCNSLTPKSTPVKTLPFSPSQFLNFWNKQDTLELESPSLTSTPVCSQKVVVTTPLHRDKTPLHQKYPSSEVLPDQKYSMDNTPHTPTPFKNALEKYGPLKPLPQTPHLEEDLKEVLRSEAGMELIIEDDMRPEKQKRKPGLRRSPIKKVRKSLALDIMDEDGKLMSSTMPKPLSLPTSVTPSSCGFTSPGSKEGNSLLNQGFLQAKPEKVVAAQKTRSHIPTPAPMTHAWKTVACGGTKDQLFMQEKARQLLSRLKSSHTSRTLILS.

HTH myb-type domains are found at residues 26–77 (RDNR…LRVL), 78–133 (NPDL…NPEV), and 134–184 (KKSC…KRKV). Positions 54 to 77 (WKFLASHFPNRTDQQCQYRWLRVL) form a DNA-binding region, H-T-H motif. Lys-104 is covalently cross-linked (Glycyl lysine isopeptide (Lys-Gly) (interchain with G-Cter in SUMO2)). 2 DNA-binding regions (H-T-H motif) span residues 106-129 (WTLI…HNHL) and 157-180 (WAEI…NSTI). Residue Lys-197 forms a Glycyl lysine isopeptide (Lys-Gly) (interchain with G-Cter in SUMO2) linkage. At Thr-267 the chain carries Phosphothreonine. Lys-275 is covalently cross-linked (Glycyl lysine isopeptide (Lys-Gly) (interchain with G-Cter in SUMO2)). Ser-282 is modified (phosphoserine). The disordered stretch occupies residues 325-412 (LSKFDLPEEP…GSGIGTPPSV (88 aa)). Residues 339–366 (SVVSSPVQPQTSQQQQEEALQSSQQAAT) are compositionally biased toward low complexity. A Phosphoserine modification is found at Ser-396. Lys-414 participates in a covalent cross-link: Glycyl lysine isopeptide (Lys-Gly) (interchain with G-Cter in SUMO2). Thr-443 and Thr-447 each carry phosphothreonine; by CDK2. Glycyl lysine isopeptide (Lys-Gly) (interchain with G-Cter in SUMO2) cross-links involve residues Lys-450 and Lys-485. 2 positions are modified to phosphothreonine; by CDK2: Thr-490 and Thr-497. Residues Lys-502 and Lys-513 each participate in a glycyl lysine isopeptide (Lys-Gly) (interchain with G-Cter in SUMO2) cross-link. Phosphothreonine; by CDK2 is present on Thr-524. Glycyl lysine isopeptide (Lys-Gly) (interchain with G-Cter in SUMO2) cross-links involve residues Lys-527, Lys-537, and Lys-550. Ser-581 is modified (phosphoserine; by CDK2). Residues Lys-588 and Lys-600 each participate in a glycyl lysine isopeptide (Lys-Gly) (interchain with G-Cter in SUMO2) cross-link. The interval 603 to 626 (SSTMPKPLSLPTSVTPSSCGFTSP) is disordered. Residues 607 to 620 (PKPLSLPTSVTPSS) are compositionally biased toward low complexity. Glycyl lysine isopeptide (Lys-Gly) (interchain with G-Cter in SUMO2) cross-links involve residues Lys-629, Lys-643, and Lys-652.

In terms of assembly, component of the DREAM complex (also named LINC complex) at least composed of E2F4, E2F5, LIN9, LIN37, LIN52, LIN54, MYBL1, MYBL2, RBL1, RBL2, RBBP4, TFDP1 and TFDP2. The complex exists in quiescent cells where it represses cell cycle-dependent genes. It dissociates in S phase when LIN9, LIN37, LIN52 and LIN54 form a subcomplex that binds to MYBL2. Interacts with CCNF (via the Cyclin N-terminal domain). In terms of processing, phosphorylated by cyclin A/CDK2 during S-phase. Phosphorylation at Thr-524 is probably involved in transcriptional activity.

The protein localises to the nucleus. Functionally, transcription factor involved in the regulation of cell survival, proliferation, and differentiation. Transactivates the expression of the CLU gene. This is Myb-related protein B (Mybl2) from Mus musculus (Mouse).